Here is a 310-residue protein sequence, read N- to C-terminus: Membrane protein insertase YidC 2 (310 aa).

The first 23 residues, 1 to 23, serve as a signal peptide directing secretion; it reads MKKTLKRILFSSLSLSILLLLTG. Cys24 carries the N-palmitoyl cysteine lipid modification. Cys24 is lipidated: S-diacylglycerol cysteine. 5 helical membrane-spanning segments follow: residues 33–53, 58–78, 135–155, 180–200, and 219–239; these read PYGVIWNTLGVPMANLITYFA, LGFGVAIIIVTIIVRVIILPL, FGGIGCLPLLIQMPFFSAIFF, LTVIIAILYFVQSWLSMQGVP, and VFMSISLPASVALYWFIGGIF. The disordered stretch occupies residues 262-310; the sequence is EYTKNPPKAYKSNNARKDVTSSTKTTESNQAIITSKKTNRNAGKQKRRG. Positions 281–297 are enriched in polar residues; sequence TSSTKTTESNQAIITSK. Positions 298–310 are enriched in basic residues; sequence KTNRNAGKQKRRG.

Belongs to the OXA1/ALB3/YidC family. Type 2 subfamily.

The protein localises to the cell membrane. In terms of biological role, required for the insertion and/or proper folding and/or complex formation of integral membrane proteins into the membrane. Involved in integration of membrane proteins that insert both dependently and independently of the Sec translocase complex, as well as at least some lipoproteins. This chain is Membrane protein insertase YidC 2, found in Streptococcus agalactiae serotype III (strain NEM316).